A 316-amino-acid polypeptide reads, in one-letter code: Pantothenate kinase (316 aa).

95–102 (GSVSVGKS) serves as a coordination point for ATP.

The protein belongs to the prokaryotic pantothenate kinase family.

It localises to the cytoplasm. The enzyme catalyses (R)-pantothenate + ATP = (R)-4'-phosphopantothenate + ADP + H(+). Its pathway is cofactor biosynthesis; coenzyme A biosynthesis; CoA from (R)-pantothenate: step 1/5. In Actinobacillus pleuropneumoniae serotype 7 (strain AP76), this protein is Pantothenate kinase.